A 258-amino-acid chain; its full sequence is Snake venom serine protease HS114 (258 aa).

The signal sequence occupies residues 1-18; that stretch reads MVLVRVVANLLILQLSYA. The propeptide occupies 19–24; it reads QKVSEL. One can recognise a Peptidase S1 domain in the interval 25–249; the sequence is VVGGDECNIN…YNTWIESVIA (225 aa). 6 disulfide bridges follow: C31–C163, C50–C66, C98–C256, C142–C210, C174–C189, and C200–C225. An N-linked (GlcNAc...) asparagine glycan is attached at N44. Residues H65 and D110 each act as charge relay system in the active site. Residue S204 is the Charge relay system of the active site.

This sequence belongs to the peptidase S1 family. Snake venom subfamily. In terms of assembly, monomer. N-glycosylated. Contains approximately 10% carbohydrates. Expressed by the venom gland.

It localises to the secreted. Its activity is regulated as follows. Inhibited by benzamidine, PMSF, leupeptin, SDS and DTT, but not by EDTA, and commercial antivenom. In terms of biological role, snake venom serine protease that shows non-specific action on fibrinogen. It preferentially degrades fibrinogen Aalpha (FGA), releasing fibrinopeptide A, and shows a lower activity on fibrinogen Bbeta (FGB), releasing fibrinopeptide B and other uncommon fibrinopeptides. Also shows low fibrinolytic activity compared to plasmin. Has high enzymatic activity on the substrates for activated protein C and factor XIa, and for thrombin. Shows a wide activity spectrum at different peptide sequences, with a preferential cleavage at Lys-|-Xaa over Arg-|-Xaa bonds. In Bothrops jararaca (Jararaca), this protein is Snake venom serine protease HS114.